The sequence spans 258 residues: Very-long-chain aldehyde decarbonylase GL1-9 (258 aa).

5 helical membrane passes run 13–33 (MGTF…QLVL), 63–83 (GVLL…MVTS), 88–108 (VVVQ…MLVM), 149–169 (PLEG…VSGM), and 175–195 (VFFF…LWLP). A Fatty acid hydroxylase domain is found at 101–237 (FLVAMLVMDS…FSIWDRILGT (137 aa)).

This sequence belongs to the sterol desaturase family. Homodimer.

The protein resides in the endoplasmic reticulum membrane. The catalysed reaction is a long-chain fatty aldehyde + 2 NADPH + O2 + H(+) = a long-chain alkane + formate + 2 NADP(+) + H2O. In terms of biological role, aldehyde decarbonylase involved in the conversion of aldehydes to alkanes. Core component of a very-long-chain alkane synthesis complex. This chain is Very-long-chain aldehyde decarbonylase GL1-9, found in Oryza sativa subsp. indica (Rice).